Reading from the N-terminus, the 186-residue chain is Elongation factor P (186 aa).

Belongs to the elongation factor P family.

It is found in the cytoplasm. The protein operates within protein biosynthesis; polypeptide chain elongation. Involved in peptide bond synthesis. Stimulates efficient translation and peptide-bond synthesis on native or reconstituted 70S ribosomes in vitro. Probably functions indirectly by altering the affinity of the ribosome for aminoacyl-tRNA, thus increasing their reactivity as acceptors for peptidyl transferase. This chain is Elongation factor P, found in Prochlorococcus marinus (strain SARG / CCMP1375 / SS120).